Consider the following 203-residue polypeptide: Endo-type membrane-bound lytic murein transglycosylase A (203 aa).

An N-terminal signal peptide occupies residues 1-15 (MKLRWFAFLIVLLAG). Cys16 is lipidated: N-palmitoyl cysteine. Cys16 carries the S-diacylglycerol cysteine lipid modification.

This sequence belongs to the transglycosylase Slt family.

The protein localises to the cell outer membrane. It carries out the reaction Endolytic cleavage of the (1-&gt;4)-beta-glycosidic linkage between N-acetylmuramic acid (MurNAc) and N-acetylglucosamine (GlcNAc) residues in peptidoglycan with concomitant formation of a 1,6-anhydrobond in the MurNAc residue.. Its function is as follows. Murein-degrading enzyme. May play a role in recycling of muropeptides during cell elongation and/or cell division. Preferentially cleaves at a distance of more than two disaccharide units from the ends of the glycan chain. This is Endo-type membrane-bound lytic murein transglycosylase A from Shigella boydii serotype 4 (strain Sb227).